We begin with the raw amino-acid sequence, 79 residues long: UPF0349 protein GTNG_2908 (79 aa).

It belongs to the UPF0349 family.

The polypeptide is UPF0349 protein GTNG_2908 (Geobacillus thermodenitrificans (strain NG80-2)).